Here is a 406-residue protein sequence, read N- to C-terminus: Vacuole membrane protein 1 (406 aa).

An N-acetylalanine modification is found at alanine 2. Residues 2-43 (AENGQNCDQRRVAMNKEQYNGNFTDPSSVNEKKRRDREERQN) are Cytoplasmic-facing. Residues 44–63 (IVLWRQPLITLQYFSLETLV) form a helical membrane-spanning segment. Residues 64-77 (ILKEWTSKLWHRQS) are Extracellular-facing. Residues 78 to 98 (IVVSFLLLLAVLTATYYVEGA) traverse the membrane as a helical segment. At 99 to 109 (HQQYVQRIEKQ) the chain is on the cytoplasmic side. The helical transmembrane segment at 110-130 (FLLYAYWIGLGILSSVGLGTG) threads the bilayer. The Extracellular segment spans residues 131 to 250 (LHTFLLYLGP…ASRAKLAVQN (120 aa)). The tract at residues 173 to 316 (GTEGTISLWS…FVIVAFSKHI (144 aa)) is VTT domain. A helical transmembrane segment spans residues 251-271 (LVQKVGFFGILACASIPNPLF). At 272-273 (DL) the chain is on the cytoplasmic side. A helical transmembrane segment spans residues 274-294 (AGITCGHFLVPFWTFFGATLI). Residues 295–306 (GKAIIKMHIQKL) are Extracellular-facing. A helical transmembrane segment spans residues 307 to 327 (FVIVAFSKHIVEQMVAFIGAV). Over 328 to 363 (PGIGPSLQKPFQEYLEAQRQKLHHRSEMGTPQGENW) the chain is Cytoplasmic. Residues 364-384 (LSWMFEKLVVVMVCYFILSII) form a helical membrane-spanning segment. Over 385–406 (NSMAQSYAKRIQQRLDPKEKTK) the chain is Extracellular.

This sequence belongs to the VMP1 family. In terms of assembly, interacts with BECN1. Interacts with TJP1. Interacts with TP53INP2. Interacts with TMEM41B. Interacts with ATP2A2, PLN and SLN; competes with PLN and SLN to prevent them from forming an inhibitory complex with ATP2A2. Interacts with ATG2A.

The protein localises to the endoplasmic reticulum-Golgi intermediate compartment membrane. The protein resides in the cell membrane. It is found in the vacuole membrane. It localises to the endoplasmic reticulum membrane. The enzyme catalyses a 1,2-diacyl-sn-glycero-3-phospho-L-serine(in) = a 1,2-diacyl-sn-glycero-3-phospho-L-serine(out). It carries out the reaction cholesterol(in) = cholesterol(out). The catalysed reaction is a 1,2-diacyl-sn-glycero-3-phosphocholine(in) = a 1,2-diacyl-sn-glycero-3-phosphocholine(out). It catalyses the reaction a 1,2-diacyl-sn-glycero-3-phosphoethanolamine(in) = a 1,2-diacyl-sn-glycero-3-phosphoethanolamine(out). Functionally, phospholipid scramblase involved in lipid homeostasis and membrane dynamics processes. Has phospholipid scramblase activity toward cholesterol and phosphatidylserine, as well as phosphatidylethanolamine and phosphatidylcholine. Required for autophagosome formation: participates in early stages of autophagosome biogenesis at the endoplasmic reticulum (ER) membrane by reequilibrating the leaflets of the ER as lipids are extracted by ATG2 (ATG2A or ATG2B) to mediate autophagosome assembly. Regulates ATP2A2 activity to control ER-isolation membrane contacts for autophagosome formation. In addition to autophagy, involved in other processes in which phospholipid scramblase activity is required. Modulates ER contacts with lipid droplets, mitochondria and endosomes. Plays an essential role in formation of cell junctions. Upon stress such as bacterial and viral infection, promotes formation of cytoplasmic vacuoles followed by cell death. Involved in the cytoplasmic vacuolization of acinar cells during the early stage of acute pancreatitis. The sequence is that of Vacuole membrane protein 1 from Bos taurus (Bovine).